The primary structure comprises 103 residues: Small ribosomal subunit protein eS24 (103 aa).

It belongs to the eukaryotic ribosomal protein eS24 family.

This Methanococcus maripaludis (strain C6 / ATCC BAA-1332) protein is Small ribosomal subunit protein eS24.